The following is a 303-amino-acid chain: Glycine--tRNA ligase alpha subunit (303 aa).

This sequence belongs to the class-II aminoacyl-tRNA synthetase family. As to quaternary structure, tetramer of two alpha and two beta subunits.

Its subcellular location is the cytoplasm. It catalyses the reaction tRNA(Gly) + glycine + ATP = glycyl-tRNA(Gly) + AMP + diphosphate. The sequence is that of Glycine--tRNA ligase alpha subunit from Streptococcus equi subsp. zooepidemicus (strain H70).